The chain runs to 2286 residues: DNA polymerase epsilon catalytic subunit A (2286 aa).

Positions 1–30 (MSLRSGGRRRADPGADGEASRDDGATSSVS) are disordered. Positions 9-24 (RRADPGADGEASRDDG) are enriched in basic and acidic residues. 4 positions are modified to phosphoserine: serine 1184, serine 1297, serine 1317, and serine 1940. Positions 1939 to 1969 (DSQKAGGAEDEQENEDDEEERDGEEEEEAEE) are disordered. Acidic residues predominate over residues 1946–1969 (AEDEQENEDDEEERDGEEEEEAEE). Positions 2158, 2161, 2187, and 2190 each coordinate Zn(2+). A CysA-type zinc finger spans residues 2158-2190 (CRSCNFCRDLDLCKDSSFSEDGAVLPQWLCSNC). The [4Fe-4S] cluster site is built by cysteine 2221, cysteine 2224, cysteine 2236, and cysteine 2238. Positions 2221 to 2238 (CLKCRGVKETSMPVYCSC) match the CysB motif motif.

Belongs to the DNA polymerase type-B family. Component of the DNA polymerase epsilon complex consisting of four subunits: the catalytic subunit POLE and the accessory subunits POLE2, POLE3 and POLE4. Interacts with RAD17 and TOPBP1.

The protein localises to the nucleus. The catalysed reaction is DNA(n) + a 2'-deoxyribonucleoside 5'-triphosphate = DNA(n+1) + diphosphate. Catalytic component of the DNA polymerase epsilon complex. Participates in chromosomal DNA replication. Required during synthesis of the leading DNA strands at the replication fork, binds at/or near replication origins and moves along DNA with the replication fork. Has 3'-5' proofreading exonuclease activity that corrects errors arising during DNA replication. Involved in DNA synthesis during DNA repair. Along with DNA polymerase POLD1 and DNA polymerase POLK, has a role in excision repair (NER) synthesis following UV irradiation. In Homo sapiens (Human), this protein is DNA polymerase epsilon catalytic subunit A.